Reading from the N-terminus, the 496-residue chain is MAGTGVFADVLDGEVYKYYADGEWRASASGKTVAIVNPTTRQTQYRVQACTQEEVNKVMDAAKVAQKSWARTPLWKRAELLHKAAAILKEHKTPIAESLVKEIAKPAKDAVSEVVRSGDLVSYTAEEGVRILGEGKLLVSDSFPGNERNKYCLSSKVPLGVVLAIPPFNYPVNLAVSKIGPALIAGNSLVLKPPTQGAVAALHMVHCFHLAGFPKGLISCVTGKGSEIGDFLTMHPGVNCISFTGGDTGIAISKKAGMVPLQMELGGKDACIVLEDADLDLVAANIVKGGFSYSGQRCTAVKVVLIMEAVADTVVEKVNAKLAKLKVGPPEDDSDITPVVTESSANFIEGLVMDAKEKGATFCQEYRREGNLIWPLLLDHVRPDMRIAWEEPFGPVLPVIRINSVEEGIHHCNASNFGLQGCVFTRDINKAIMISDAMESGTVQINSAPARGPDHFPFQGLKDSGIGSQGITNSINMMTKVKSTVINLPSPSYTMG.

Substrate is bound by residues arginine 116 and 169-170 (NY). Lysine 192, threonine 195, and aspartate 230 together coordinate NADP(+). 245–249 (GGDTG) contributes to the NAD(+) binding site. Glutamate 264 acts as the Proton acceptor in catalysis. 297–299 (RCT) contacts substrate. Cysteine 298 functions as the Nucleophile in the catalytic mechanism. Residue glutamate 391 coordinates NADP(+). Serine 404 carries the phosphoserine modification. Arginine 451 contributes to the substrate binding site.

Belongs to the aldehyde dehydrogenase family. As to quaternary structure, interacts with 14-3-3 protein when phosphorylated. This interaction is released by divalent cations. Post-translationally, phosphorylated in shoots and non-photosynthetic tissues, but not in leaves.

The protein localises to the cytoplasm. It carries out the reaction D-glyceraldehyde 3-phosphate + NADP(+) + H2O = (2R)-3-phosphoglycerate + NADPH + 2 H(+). Its activity is regulated as follows. Insensitive to magnesium or calcium when dephosphorylated. When phosphorylated, 3-fold activation by magnesium or calcium, 2-fold activation by potassium, inhibited by ADP and AMP and insensitive to ATP or PPi. Functionally, important as a means of generating NADPH for biosynthetic reactions. In Triticum aestivum (Wheat), this protein is NADP-dependent glyceraldehyde-3-phosphate dehydrogenase (GAPN).